The chain runs to 219 residues: Regulatory protein YeiL (219 aa).

A sensory domain region spans residues 19–97; that stretch reads RLFHFLARDY…IEECWCLALP (79 aa). [4Fe-4S] cluster-binding residues include C68, C91, C93, and C116. The dimer interface stretch occupies residues 111–131; sequence FLRKLCVTLSHKNYRNIVSLT. Positions 136 to 199 constitute an HTH crp-type domain; sequence FPLVNRLAAF…KKGYLIKNRK (64 aa). The H-T-H motif DNA-binding region spans 158 to 181; that stretch reads KHTQAAEYLGVSYRHLLYVLAQFI.

As to quaternary structure, homodimer. [4Fe-4S] cluster is required as a cofactor.

Its subcellular location is the cytoplasm. Transcription regulator involved in mid-term, stationary-phase viability under nitrogen starvation. Might control expression of the salvage pathways or in some other way repress the recycling of nucleobases to nucleic acids and enhance their use as general nitrogen sources during nitrogen-limited growth. This is Regulatory protein YeiL (yeiL) from Escherichia coli O157:H7.